The following is a 418-amino-acid chain: LL-diaminopimelate aminotransferase (418 aa).

2 residues coordinate substrate: tyrosine 25 and glycine 52. Residues tyrosine 78, 115–116, tyrosine 140, asparagine 190, tyrosine 221, and 248–250 contribute to the pyridoxal 5'-phosphate site; these read SK and SFS. Residues lysine 116, tyrosine 140, and asparagine 190 each coordinate substrate. Lysine 251 is subject to N6-(pyridoxal phosphate)lysine. A pyridoxal 5'-phosphate-binding site is contributed by arginine 259.

This sequence belongs to the class-I pyridoxal-phosphate-dependent aminotransferase family. As to quaternary structure, homodimer. Requires pyridoxal 5'-phosphate as cofactor.

It localises to the cytoplasm. It carries out the reaction (2S,6S)-2,6-diaminopimelate + 2-oxoglutarate = (S)-2,3,4,5-tetrahydrodipicolinate + L-glutamate + H2O + H(+). It participates in amino-acid biosynthesis; L-lysine biosynthesis via DAP pathway; LL-2,6-diaminopimelate from (S)-tetrahydrodipicolinate (aminotransferase route): step 1/1. Involved in the synthesis of meso-diaminopimelate (m-DAP or DL-DAP), required for both lysine and peptidoglycan biosynthesis. Catalyzes the direct conversion of tetrahydrodipicolinate to LL-diaminopimelate, a reaction that requires three enzymes in E.coli. The chain is LL-diaminopimelate aminotransferase (dapL) from Methanocaldococcus jannaschii (strain ATCC 43067 / DSM 2661 / JAL-1 / JCM 10045 / NBRC 100440) (Methanococcus jannaschii).